The sequence spans 629 residues: tRNA uridine 5-carboxymethylaminomethyl modification enzyme MnmG (629 aa).

FAD-binding positions include 14–19 (GAGHAG), Val-126, and Ser-181. 273–287 (GPRYCPSIEDKVVRF) is an NAD(+) binding site. Residue Gln-370 coordinates FAD.

The protein belongs to the MnmG family. Homodimer. Heterotetramer of two MnmE and two MnmG subunits. The cofactor is FAD.

It is found in the cytoplasm. In terms of biological role, NAD-binding protein involved in the addition of a carboxymethylaminomethyl (cmnm) group at the wobble position (U34) of certain tRNAs, forming tRNA-cmnm(5)s(2)U34. This Bacillus cereus (strain ATCC 14579 / DSM 31 / CCUG 7414 / JCM 2152 / NBRC 15305 / NCIMB 9373 / NCTC 2599 / NRRL B-3711) protein is tRNA uridine 5-carboxymethylaminomethyl modification enzyme MnmG.